Here is a 334-residue protein sequence, read N- to C-terminus: Large ribosomal subunit protein uL3 (334 aa).

Positions 1-10 are enriched in basic residues; the sequence is MGMKKNRPRR. The disordered stretch occupies residues 1 to 21; that stretch reads MGMKKNRPRRGSLAFSPRKRA.

Belongs to the universal ribosomal protein uL3 family. Part of the 50S ribosomal subunit. Forms a cluster with proteins L14 and L24e.

Functionally, one of the primary rRNA binding proteins, it binds directly near the 3'-end of the 23S rRNA, where it nucleates assembly of the 50S subunit. The chain is Large ribosomal subunit protein uL3 from Methanococcus maripaludis (strain DSM 14266 / JCM 13030 / NBRC 101832 / S2 / LL).